Reading from the N-terminus, the 382-residue chain is Probable cytosolic iron-sulfur protein assembly protein 1 (382 aa).

7 WD repeats span residues 9-48 (AHHDKIWSVSSHQKLPLLATGSSDKTSAIFRLSETEKFPR), 55-107 (THTR…DNDE), 138-178 (GHEH…EEFE), 185-224 (EHQQDVKHVIWHPTQNLLASSSYDDTICIYRQEYDDDDWG), 231-278 (GHQG…SETN), 303-342 (AHTYPVYSVVWSSVSGRIASAGADGKIAVYKQTDGVWEIE), and 349-382 (HGVHEINTLAWSKLDDNREVLVSGGDDGYVNVWE).

The protein belongs to the WD repeat CIA1 family. Interacts with NAR1.

Its subcellular location is the cytoplasm. The protein localises to the nucleus. Essential component of the cytosolic iron-sulfur (Fe/S) protein assembly machinery. Required for the maturation of extramitochondrial Fe/S proteins. The protein is Probable cytosolic iron-sulfur protein assembly protein 1 of Meyerozyma guilliermondii (strain ATCC 6260 / CBS 566 / DSM 6381 / JCM 1539 / NBRC 10279 / NRRL Y-324) (Yeast).